A 329-amino-acid chain; its full sequence is Malate dehydrogenase (329 aa).

11–17 contributes to the NAD(+) binding site; it reads GAAGQIG. Substrate-binding residues include arginine 92 and arginine 98. NAD(+)-binding positions include asparagine 105, glutamine 112, and 129-131; that span reads VGN. Residues asparagine 131 and arginine 165 each coordinate substrate. The Proton acceptor role is filled by histidine 190.

This sequence belongs to the LDH/MDH superfamily. MDH type 2 family.

The catalysed reaction is (S)-malate + NAD(+) = oxaloacetate + NADH + H(+). Its function is as follows. Catalyzes the reversible oxidation of malate to oxaloacetate. In Laribacter hongkongensis (strain HLHK9), this protein is Malate dehydrogenase.